An 818-amino-acid polypeptide reads, in one-letter code: Fibrous sheath CABYR-binding protein (818 aa).

The disordered stretch occupies residues 1 to 61 (MEEKDESEQS…PKAALSIGNI (61 aa)). A phosphoserine mark is found at Ser-25, Ser-57, and Ser-182. Disordered stretches follow at residues 195 to 727 (SFSK…PFIT) and 773 to 805 (LESG…NEGV). Low complexity-rich tracts occupy residues 490–511 (SPPA…PAEE), 544–560 (EAPA…PAEE), and 697–715 (AELQ…VSVE). A compositionally biased stretch (basic and acidic residues) spans 773–794 (LESGNLDDKPKSEEPLERDTIP).

As to quaternary structure, interacts with CABYR. Interacts with ROPN1 and ROPN1L; the interaction increases upon spermatozoa capacitation conditions. Post-translationally, phosphorylated by PKA upon spermatozoa capacitation conditions.

The protein resides in the cell projection. The protein localises to the cilium. It localises to the flagellum. Functionally, may be involved in the later stages of fibrous sheath biogenesis and spermatozoa capacitation. Inhibits ROPN1 and ROPN1L SUMOylation. Binds calcium. The sequence is that of Fibrous sheath CABYR-binding protein from Bos taurus (Bovine).